A 320-amino-acid polypeptide reads, in one-letter code: Cell-cell adhesion glycoprotein 64 (320 aa).

Positions 1–19 (MNKFITLFVLLASVSVAMS) are cleaved as a signal peptide. 9 cysteine pairs are disulfide-bonded: cysteine 39/cysteine 57, cysteine 67/cysteine 79, cysteine 73/cysteine 86, cysteine 98/cysteine 110, cysteine 104/cysteine 115, cysteine 123/cysteine 138, cysteine 132/cysteine 147, cysteine 157/cysteine 171, and cysteine 165/cysteine 176. Asparagine 49 is a glycosylation site (N-linked (GlcNAc...) asparagine). Asparagine 80 carries an N-linked (GlcNAc...) asparagine glycan. N-linked (GlcNAc...) asparagine glycosylation is found at asparagine 141 and asparagine 158. Asparagine 187 is a glycosylation site (N-linked (GlcNAc...) asparagine). Intrachain disulfides connect cysteine 188–cysteine 202 and cysteine 194–cysteine 207. N-linked (GlcNAc...) asparagine glycosylation is present at asparagine 216. Disulfide bonds link cysteine 226–cysteine 246, cysteine 232–cysteine 234, cysteine 266–cysteine 285, and cysteine 270–cysteine 281. Residue serine 298 is the site of GPI-like-anchor amidated serine attachment. A propeptide spans 299 to 320 (SATTIAFNAFVVFAIVLSVLLF) (removed in mature form).

In terms of processing, contains 18 disulfide bonds. Post-translationally, the GPI-like-anchor contains a phosphoceramide group, rather than a phosphatidyl group.

The protein localises to the cell membrane. Cell-cell adhesion during development. This Heterostelium pallidum (Cellular slime mold) protein is Cell-cell adhesion glycoprotein 64.